We begin with the raw amino-acid sequence, 543 residues long: Protein GPR108 (543 aa).

The first 32 residues, 1–32 (MAVSERRGLGRGSPAEWGQRLLLVLLLGGCSG), serve as a signal peptide directing secretion. Residues asparagine 57 and asparagine 109 are each glycosylated (N-linked (GlcNAc...) asparagine). The tract at residues 149 to 186 (SKPGLPKPQATVPRKVDGGGTSAASKPKSTPAVIQGPS) is disordered. 3 N-linked (GlcNAc...) asparagine glycosylation sites follow: asparagine 200, asparagine 204, and asparagine 228. 7 helical membrane-spanning segments follow: residues 263 to 283 (LYMV…SILC), 292 to 312 (IHWL…FHSI), 336 to 356 (LLKG…WAFI), 367 to 387 (VFGI…IIES), 401 to 421 (ILFL…VWSI), 449 to 469 (VMVI…QVAV), and 473 to 493 (WQWL…VLTG). An N-linked (GlcNAc...) asparagine glycan is attached at asparagine 534.

It belongs to the LU7TM family.

It is found in the golgi apparatus. It localises to the cis-Golgi network membrane. The protein resides in the trans-Golgi network membrane. Its subcellular location is the golgi apparatus membrane. Its function is as follows. May play a role in intracellular immune modulation by activating NF-kappaB response and attenuating Toll-like-receptor response. Functionally, (Microbial infection) Plays an essential function in adeno-associated virus (AAV) transduction across multiple serotypes except AAV5. May play a critical role in mediating the endosomal virus escape or in the AAV virions trafficking from endosomes to the nucleus. In Homo sapiens (Human), this protein is Protein GPR108.